Here is a 760-residue protein sequence, read N- to C-terminus: Prolyl endopeptidase FAP (760 aa).

The Cytoplasmic portion of the chain corresponds to 1–4 (MKTW). Residues 5–25 (LKIVFGVATSAVLALLVMCIV) traverse the membrane as a helical; Signal-anchor for type II membrane protein segment. Over 26–760 (LRPSRVHNSE…FLKQCFSLSD (735 aa)) the chain is Extracellular. 3 N-linked (GlcNAc...) asparagine glycosylation sites follow: asparagine 49, asparagine 92, and asparagine 99. The substrate site is built by glutamate 203 and glutamate 204. Residues asparagine 227 and asparagine 314 are each glycosylated (N-linked (GlcNAc...) asparagine). 3 cysteine pairs are disulfide-bonded: cysteine 321/cysteine 332, cysteine 438/cysteine 441, and cysteine 448/cysteine 466. Positions 481–512 (TDQEIKILEDNKELENALKNIQLPKEEIKKLK) form a coiled coil. Serine 624 functions as the Charge relay system in the catalytic mechanism. The cysteines at positions 643 and 755 are disulfide-linked. An N-linked (GlcNAc...) asparagine glycan is attached at asparagine 679. Catalysis depends on charge relay system residues aspartate 702 and histidine 734.

Belongs to the peptidase S9B family. Homodimer; homodimerization is required for activity of both plasma membrane and soluble forms. The monomer is inactive. Heterodimer with DPP4. Interacts with PLAUR; the interaction occurs at the cell surface of invadopodia membranes. Interacts with ITGB1. Interacts with ITGA3. Associates with integrin alpha-3/beta-1; the association occurs in a collagen-dependent manner at the cell surface of invadopodia membranes. In terms of processing, N-glycosylated. The N-terminus may be blocked.

The protein localises to the cell surface. It localises to the cell membrane. The protein resides in the cell projection. It is found in the lamellipodium membrane. Its subcellular location is the invadopodium membrane. The protein localises to the ruffle membrane. It localises to the membrane. The protein resides in the secreted. It carries out the reaction Release of an N-terminal dipeptide, Xaa-Yaa-|-Zaa-, from a polypeptide, preferentially when Yaa is Pro, provided Zaa is neither Pro nor hydroxyproline.. The catalysed reaction is Hydrolysis of Pro-|-Xaa &gt;&gt; Ala-|-Xaa in oligopeptides.. Gelatinase activity is inhibited by serine-protease inhibitors, such as phenylmethylsulfonyl fluoride (PMSF), 4-(2-aminoethyl)-benzenesulfonyl fluoride hydrochloride (AEBSF), 4-amidino phenylsulfonyl fluoride (APSF) and diisopropyl fluorophosphate (DFP), N-ethylmaleimide (NEM) and phenylmethylsulfonyl fluoride (PMSF). Dipeptidyl peptidase activity is inhibited by 2,2'-azino-bis(3-ethylbenzthiazoline-6-sulfonic acid), diisopropylfluorophosphate (DFP). Prolyl endopeptidase activity is inhibited by the boronic acid peptide Ac-Gly-BoroPro, Ac-Gly-Pro-chloromethyl ketone and Thr-Ser-Gly-chloromethyl ketone. In terms of biological role, cell surface glycoprotein serine protease that participates in extracellular matrix degradation and involved in many cellular processes including tissue remodeling, fibrosis, wound healing, inflammation and tumor growth. Both plasma membrane and soluble forms exhibit post-proline cleaving endopeptidase activity, with a marked preference for Ala/Ser-Gly-Pro-Ser/Asn/Ala consensus sequences, on substrate such as alpha-2-antiplasmin SERPINF2 and SPRY2. Degrade also gelatin, heat-denatured type I collagen, but not native collagen type I and IV, vibronectin, tenascin, laminin, fibronectin, fibrin or casein. Also has dipeptidyl peptidase activity, exhibiting the ability to hydrolyze the prolyl bond two residues from the N-terminus of synthetic dipeptide substrates provided that the penultimate residue is proline, with a preference for Ala-Pro, Ile-Pro, Gly-Pro, Arg-Pro and Pro-Pro. Natural neuropeptide hormones for dipeptidyl peptidase are the neuropeptide Y (NPY), peptide YY (PYY), substance P (TAC1) and brain natriuretic peptide 32 (NPPB). The plasma membrane form, in association with either DPP4, PLAUR or integrins, is involved in the pericellular proteolysis of the extracellular matrix (ECM), and hence promotes cell adhesion, migration and invasion through the ECM. Plays a role in tissue remodeling during development and wound healing. Participates in the cell invasiveness towards the ECM in malignant melanoma cancers. Enhances tumor growth progression by increasing angiogenesis, collagen fiber degradation and apoptosis and by reducing antitumor response of the immune system. Promotes glioma cell invasion through the brain parenchyma by degrading the proteoglycan brevican. Acts as a tumor suppressor in melanocytic cells through regulation of cell proliferation and survival in a serine protease activity-independent manner. In Bos taurus (Bovine), this protein is Prolyl endopeptidase FAP.